Consider the following 474-residue polypeptide: Hepatocyte nuclear factor 4-alpha (474 aa).

The segment at residues 57 to 132 (SALCAICGDR…AGMKKEAVQN (76 aa)) is a DNA-binding region (nuclear receptor). 2 consecutive NR C4-type zinc fingers follow at residues 60–80 (CAIC…CDGC) and 96–120 (CRFS…LKKC). Ser142 and Ser143 each carry phosphoserine; by PKA. A Phosphotyrosine modification is found at Tyr144. An NR LBD domain is found at 147–377 (SSLPSINALL…NLLQEMLLGG (231 aa)). Thr166 bears the Phosphothreonine mark. Ser167 is modified (phosphoserine). Glycyl lysine isopeptide (Lys-Gly) (interchain with G-Cter in ubiquitin) cross-links involve residues Lys234 and Lys307. Residue Ser313 is modified to Phosphoserine; by AMPK. Residues 368 to 376 (NLLQEMLLG) carry the 9aaTAD motif. The interval 413 to 450 (SNGQMCEWPRPRGQAATPETPQPSPPSGSGSESYKLLP) is disordered. Phosphothreonine is present on residues Thr429 and Thr432. Phosphoserine is present on Ser436. Lys458 carries the N6-acetyllysine modification.

This sequence belongs to the nuclear hormone receptor family. NR2 subfamily. As to quaternary structure, homodimerization is required for HNF4-alpha to bind to its recognition site. Interacts with CLOCK, BMAL1, CRY1, CRY2, PER1 and PER2. Interacts with NR0B2/SHP; the resulting heterodimer is transcriptionally inactive. Interacts with DDX3X; this interaction disrupts the interaction between HNF4 and NR0B2 that forms inactive heterodimers and enhances the formation of active HNF4 homodimers. Post-translationally, phosphorylation at Ser-313 by AMPK reduces the ability to form homodimers and bind DNA. Phosphorylated in the recognition sequence R-R-S-S near the DNA-binding domain; phosphorylation results in decrease in DNA-binding activity. Phosphorylation of HNF4 depends on the diet and is decreased by a carbohydrate-rich diet and is increased by fasting. In terms of processing, the N-terminus is blocked. Acetylation at Lys-458 lowers transcriptional activation by about two-fold. In terms of tissue distribution, liver, kidney and intestine.

It is found in the nucleus. In terms of biological role, transcriptional regulator which controls the expression of hepatic genes during the transition of endodermal cells to hepatic progenitor cells, facilitating the recruitment of RNA pol II to the promoters of target genes. Activates the transcription of CYP2C38. Represses the CLOCK-BMAL1 transcriptional activity and is essential for circadian rhythm maintenance and period regulation in the liver and colon cells. The chain is Hepatocyte nuclear factor 4-alpha (Hnf4a) from Rattus norvegicus (Rat).